The chain runs to 149 residues: Cell division protein SepF (149 aa).

A disordered region spans residues 12 to 57 (SNEEDDYYEEDGYEQSQQQEQQTTQQTSSQPRFVRQTTQSQTPAGL). The segment covering 13 to 24 (NEEDDYYEEDGY) has biased composition (acidic residues). Residues 25–41 (EQSQQQEQQTTQQTSSQ) show a composition bias toward low complexity. Polar residues predominate over residues 46 to 57 (RQTTQSQTPAGL).

It belongs to the SepF family. In terms of assembly, homodimer. Interacts with FtsZ.

It localises to the cytoplasm. Its function is as follows. Cell division protein that is part of the divisome complex and is recruited early to the Z-ring. Probably stimulates Z-ring formation, perhaps through the cross-linking of FtsZ protofilaments. Its function overlaps with FtsA. This Leuconostoc mesenteroides subsp. mesenteroides (strain ATCC 8293 / DSM 20343 / BCRC 11652 / CCM 1803 / JCM 6124 / NCDO 523 / NBRC 100496 / NCIMB 8023 / NCTC 12954 / NRRL B-1118 / 37Y) protein is Cell division protein SepF.